Reading from the N-terminus, the 423-residue chain is Adenylosuccinate synthetase (423 aa).

GTP is bound by residues 12-18 and 40-42; these read GDEGKGK and GHT. Asp-13 functions as the Proton acceptor in the catalytic mechanism. Residues Asp-13 and Gly-40 each contribute to the Mg(2+) site. IMP contacts are provided by residues 13–16, 38–41, Thr-129, Arg-143, Gln-221, Thr-236, and Arg-300; these read DEGK and NAGH. His-41 acts as the Proton donor in catalysis. 296-302 lines the substrate pocket; sequence SVTGRKR. GTP contacts are provided by residues Arg-302, 328-330, and 408-410; these read KSD and SVG.

The protein belongs to the adenylosuccinate synthetase family. As to quaternary structure, homodimer. Requires Mg(2+) as cofactor.

The protein resides in the cytoplasm. The enzyme catalyses IMP + L-aspartate + GTP = N(6)-(1,2-dicarboxyethyl)-AMP + GDP + phosphate + 2 H(+). It functions in the pathway purine metabolism; AMP biosynthesis via de novo pathway; AMP from IMP: step 1/2. Plays an important role in the de novo pathway of purine nucleotide biosynthesis. Catalyzes the first committed step in the biosynthesis of AMP from IMP. The protein is Adenylosuccinate synthetase of Bacteroides fragilis (strain ATCC 25285 / DSM 2151 / CCUG 4856 / JCM 11019 / LMG 10263 / NCTC 9343 / Onslow / VPI 2553 / EN-2).